The primary structure comprises 778 residues: Aerobic respiration control sensor protein ArcB (778 aa).

Topologically, residues Met1–Met25 are cytoplasmic. Residues Leu26–Leu46 traverse the membrane as a helical segment. Topologically, residues His47–Arg57 are periplasmic. The helical transmembrane segment at Ser58 to Glu78 threads the bilayer. Over Gln79–Lys778 the chain is Cytoplasmic. Positions Gln153 to Asn223 constitute a PAS domain. The PAC domain maps to Leu226 to Arg278. One can recognise a Histidine kinase domain in the interval Thr289 to Ser507. His292 carries the post-translational modification Phosphohistidine; by autocatalysis. The region spanning Asn527–Trp643 is the Response regulatory domain. A 4-aspartylphosphate modification is found at Asp576. Residues Gly678–Trp771 form the HPt domain. His717 carries the post-translational modification Phosphohistidine.

In terms of processing, activation requires a sequential transfer of a phosphate group from a His in the primary transmitter domain, to an Asp in the receiver domain and to a His in the secondary transmitter domain.

The protein resides in the cell inner membrane. It catalyses the reaction ATP + protein L-histidine = ADP + protein N-phospho-L-histidine.. Functionally, member of the two-component regulatory system ArcB/ArcA. Sensor-regulator protein for anaerobic repression of the arc modulon. Activates ArcA via a four-step phosphorelay. ArcB can also dephosphorylate ArcA by a reverse phosphorelay involving His-717 and Asp-576. In Escherichia coli (strain K12), this protein is Aerobic respiration control sensor protein ArcB (arcB).